The following is a 566-amino-acid chain: Proline--tRNA ligase (566 aa).

Belongs to the class-II aminoacyl-tRNA synthetase family. ProS type 1 subfamily. In terms of assembly, homodimer.

It is found in the cytoplasm. The catalysed reaction is tRNA(Pro) + L-proline + ATP = L-prolyl-tRNA(Pro) + AMP + diphosphate. Catalyzes the attachment of proline to tRNA(Pro) in a two-step reaction: proline is first activated by ATP to form Pro-AMP and then transferred to the acceptor end of tRNA(Pro). As ProRS can inadvertently accommodate and process non-cognate amino acids such as alanine and cysteine, to avoid such errors it has two additional distinct editing activities against alanine. One activity is designated as 'pretransfer' editing and involves the tRNA(Pro)-independent hydrolysis of activated Ala-AMP. The other activity is designated 'posttransfer' editing and involves deacylation of mischarged Ala-tRNA(Pro). The misacylated Cys-tRNA(Pro) is not edited by ProRS. This Bacillus mycoides (strain KBAB4) (Bacillus weihenstephanensis) protein is Proline--tRNA ligase.